The primary structure comprises 364 residues: Histidinol-phosphate aminotransferase (364 aa).

K226 bears the N6-(pyridoxal phosphate)lysine mark.

The protein belongs to the class-II pyridoxal-phosphate-dependent aminotransferase family. Histidinol-phosphate aminotransferase subfamily. In terms of assembly, homodimer. The cofactor is pyridoxal 5'-phosphate.

It carries out the reaction L-histidinol phosphate + 2-oxoglutarate = 3-(imidazol-4-yl)-2-oxopropyl phosphate + L-glutamate. The protein operates within amino-acid biosynthesis; L-histidine biosynthesis; L-histidine from 5-phospho-alpha-D-ribose 1-diphosphate: step 7/9. The chain is Histidinol-phosphate aminotransferase from Campylobacter jejuni subsp. doylei (strain ATCC BAA-1458 / RM4099 / 269.97).